Consider the following 256-residue polypeptide: Tumor necrosis factor receptor superfamily member 9 (256 aa).

A signal peptide spans 1 to 23 (MGNNCYNVVVIVLLLVGCEKVGA). TNFR-Cys repeat units follow at residues 24–45 (VQNSCDNCQPGTFCRKYNPVCK), 46–85 (SCPPSTFSSIGGQPNCNICRVCAGYFRFKKFCSSTHNAEC), 86–117 (ECIEGFHCLGPQCTRCEKDCRPGQELTKQGCK), and 118–159 (TCSL…VVCG). At 24 to 187 (VQNSCDNCQP…GPGGHSLQVL (164 aa)) the chain is on the extracellular side. Intrachain disulfides connect cysteine 28–cysteine 37, cysteine 31–cysteine 44, cysteine 47–cysteine 61, cysteine 64–cysteine 77, cysteine 67–cysteine 85, cysteine 87–cysteine 93, cysteine 98–cysteine 105, cysteine 101–cysteine 116, and cysteine 119–cysteine 133. Residues asparagine 128 and asparagine 138 are each glycosylated (N-linked (GlcNAc...) asparagine). Cysteine 139 and cysteine 158 are disulfide-bonded. The helical transmembrane segment at 188–208 (TLFLALTSALLLALIFITLLF) threads the bilayer. Over 209 to 256 (SVLKWIRKKFPHIFKQPFKKTTGAAQEEDACSCRCPQEEEGGGGGYEL) the chain is Cytoplasmic.

As to quaternary structure, predominantly homodimeric, but may also exist as a monomer. Associates with p56-LCK. Interacts with TRAF1, TRAF2 and TRAF3. As to expression, expressed in activated thymocytes, splenic T cells, CD4(+), and CD8(+) T-cells.

It localises to the cell membrane. In terms of biological role, receptor for TNFSF9/4-1BBL. Conveys a signal that enhances CD8(+) T-cell survival, cytotoxicity, and mitochondrial activity, thereby promoting immunity against viruses and tumors. The polypeptide is Tumor necrosis factor receptor superfamily member 9 (Tnfrsf9) (Mus musculus (Mouse)).